Reading from the N-terminus, the 247-residue chain is Cell division protein ZapD (247 aa).

The protein belongs to the ZapD family. Interacts with FtsZ.

The protein resides in the cytoplasm. Cell division factor that enhances FtsZ-ring assembly. Directly interacts with FtsZ and promotes bundling of FtsZ protofilaments, with a reduction in FtsZ GTPase activity. The chain is Cell division protein ZapD from Escherichia coli O157:H7.